A 570-amino-acid polypeptide reads, in one-letter code: Urease subunit alpha (570 aa).

One can recognise a Urease domain in the interval 131 to 570; sequence GGIDSHIHFI…LPMTQRYFLF (440 aa). Ni(2+) is bound by residues His-136, His-138, and Lys-219. Lys-219 bears the N6-carboxylysine mark. His-221 is a binding site for substrate. Residues His-248 and His-274 each contribute to the Ni(2+) site. His-322 (proton donor) is an active-site residue. Residue Asp-362 participates in Ni(2+) binding.

Belongs to the metallo-dependent hydrolases superfamily. Urease alpha subunit family. Heterotrimer of UreA (gamma), UreB (beta) and UreC (alpha) subunits. Three heterotrimers associate to form the active enzyme. Requires Ni cation as cofactor. Carboxylation allows a single lysine to coordinate two nickel ions.

Its subcellular location is the cytoplasm. It carries out the reaction urea + 2 H2O + H(+) = hydrogencarbonate + 2 NH4(+). The protein operates within nitrogen metabolism; urea degradation; CO(2) and NH(3) from urea (urease route): step 1/1. The polypeptide is Urease subunit alpha (Trichodesmium erythraeum (strain IMS101)).